We begin with the raw amino-acid sequence, 406 residues long: MNVAKREFIRGMMAHYRASLPPPEHSVVIHELQKRVLDIGMLAVNKAHVELFGSHVSGFCTPHSDADISLTYRNFSPWLQGMERVDEQNNKRMTRFGKEASAMGMEDVRYIRARIPVVQFTDGVTGIHCDVSIGNIGGVENSKILCAIRQVFPDFYGAYIHLVKAWGKAREVIAPERSTFNSFTVTTMALMVLQELGLLPVFSKPTGEFGELTVADAEMLLQEFKLPPIYDSLHDDDEKLGEAVFFCLQRFAEYYAKYDFSAGTVSLIHPRRHRTVYERVVRRHLELLGSRKRLEWEKHIAEHKEDGPLDENDFSASMQNETTQRPSNSPYVVEDFVNYVNCGRRVQASRVRHIQQEFNRLREMLIDKESELKFDEVFRESDTVPRFQGFEGVGTRDHRVKTFRPQ.

A mitochondrion-targeting transit peptide spans 1–15 (MNVAKREFIRGMMAH). Residues Ser-54 and 64-65 (SD) contribute to the UTP site. Asp-65 and Asp-67 together coordinate Mg(2+). UTP-binding positions include 138-142 (GVENS), Lys-164, Lys-168, and 181-183 (NSF).

This sequence belongs to the DNA polymerase type-B-like family. Component of the mitochondrial RNA editing core complex-like (RECC-like), also known as the editosome-like complex; only a small proportion of MEAT1 associates with the complex. Interacts with RNA-editing ligase REL1. It depends on Mg(2+) as a cofactor.

Its subcellular location is the mitochondrion matrix. It catalyses the reaction RNA(n) + UTP = RNA(n)-3'-uridine ribonucleotide + diphosphate. In terms of biological role, terminal uridylyltransferase which, as part of the mitochondrial RNA editing core-like complex (RECC-like), is involved in the post-transcriptional editing of mitochondrial RNA, a process involving the addition and deletion of uridine (U) nucleotides in the pre-mRNA. Specifically, catalyzes the addition of U to single-stranded RNA with a preference for a 3'-terminal U and adds the number of Us specified by a guide RNA (gRNA) to precleaved double-stranded RNA editing substrates. Essential for insect and bloodstream developmental forms viability. The protein is Terminal uridylyltransferase 7 of Trypanosoma brucei brucei.